A 172-amino-acid chain; its full sequence is C-phycocyanin beta chain (172 aa).

Asparagine 72 is modified (N4-methylasparagine). Residues cysteine 82 and cysteine 153 each coordinate (2R,3E)-phycocyanobilin.

The protein belongs to the phycobiliprotein family. As to quaternary structure, heterodimer of an alpha and a beta subunit, which further assembles into trimers and the trimers into hexamers. The basic functional unit of phycobiliproteins is a ring-shaped hexamer formed from two back-to-back trimers contacting via the alpha chain subunits. The trimers are composed of alpha/beta subunit heterodimers arranged around a three-fold axis of symmetry. The phycoerythrins also contain a gamma subunit which is located in the center of the hexamer. Contains two covalently linked bilin chromophores.

It is found in the plastid. Its subcellular location is the chloroplast thylakoid membrane. In terms of biological role, light-harvesting photosynthetic bile pigment-protein from the phycobiliprotein complex (phycobilisome, PBS). Phycocyanin is the major phycobiliprotein in the PBS rod. The chain is C-phycocyanin beta chain (cpcB) from Pyropia haitanensis (Red seaweed).